We begin with the raw amino-acid sequence, 558 residues long: MTTMTTKFRDVEIRAPRGTELTAKSWLTEAPLRMLMNNLDPDVAENPKELVVYGGIGRAARNWECFDKIVDTLKNLETDETLLVQSGKPVGVFKTHKDAPRVLIANSNLVPHWANWEHFNELDAKALAMYGQMTAGSWIYIGSQGIVQGTYETFVEAGRQHYNGDLKGRWVLTAGLGGMGGAQPLAATLAGACSLNIECQQASIDFRLRTRYVDEQATDLDDALARIDRYTKEGKAISIALHGNAAEILPELVRRGVRPDMVTDQTSAHDPLNGYLPVGWTWDEYRERAKKEPEAVVKAAKQSMAKHVQAMLDFQKMGVPTFDYGNNIRQMAKEEGVANAFDFPGFVPAYIRPLFCRGIGPFRWAALSGDPEDIYKTDAKVKELIPDDEHLHHWLDMARERISFQGLPARICWVGLGLRAKLGLAFNEMVRSGELSAPIVIGRDHLDSGSVASPNRETEAMQDGSDAVSDWPLLNALLNTAGGATWVSLHHGGGVGMGFSQHSGVVIVCDGTDEAAARIARVLTNDPATGVMRHADAGYEIAINCAKEQGLHLPMITQ.

NAD(+) is bound by residues 54–55, glutamine 132, 178–180, glutamate 198, 244–245, 265–269, 275–276, and tyrosine 324; these read GG, GMG, NA, QTSAH, and YL. The active site involves cysteine 412. Glycine 494 provides a ligand contact to NAD(+).

This sequence belongs to the urocanase family. The cofactor is NAD(+).

Its subcellular location is the cytoplasm. It carries out the reaction 4-imidazolone-5-propanoate = trans-urocanate + H2O. The protein operates within amino-acid degradation; L-histidine degradation into L-glutamate; N-formimidoyl-L-glutamate from L-histidine: step 2/3. Its function is as follows. Catalyzes the conversion of urocanate to 4-imidazolone-5-propionate. The polypeptide is Urocanate hydratase (Acinetobacter baumannii (strain AB307-0294)).